Reading from the N-terminus, the 465-residue chain is Cysteine--tRNA ligase (465 aa).

Cysteine 27 serves as a coordination point for Zn(2+). A 'HIGH' region motif is present at residues 29–39; that stretch reads PTVYDDAHLGH. Zn(2+) contacts are provided by cysteine 207, histidine 237, and glutamate 241. The 'KMSKS' region signature appears at 269 to 273; sequence KMSKS. Lysine 272 serves as a coordination point for ATP.

It belongs to the class-I aminoacyl-tRNA synthetase family. Monomer. Zn(2+) is required as a cofactor.

Its subcellular location is the cytoplasm. The enzyme catalyses tRNA(Cys) + L-cysteine + ATP = L-cysteinyl-tRNA(Cys) + AMP + diphosphate. The polypeptide is Cysteine--tRNA ligase (Helicobacter pylori (strain G27)).